A 605-amino-acid chain; its full sequence is Probable potassium transport system protein Kup 1 (605 aa).

12 helical membrane-spanning segments follow: residues 16-36, 46-66, 97-117, 138-158, 166-186, 212-232, 248-268, 287-307, 339-359, 368-388, 397-417, and 418-438; these read ALGLVFGDIGTSPIYTLTVIF, VFGILSLVFWTMTILVTMEYA, VAFAGFLSFVGVSLLLGDGVI, GLSTGTLVAIAAAIAIGLFSV, VAGAFGPIMAVWFSTLAVTGV, GLAGYFVLSEVILCSTGGEAL, WYFVFMALYLNYLGQGVFAIT, LYIPFLILTIMATIIASQSII, IYLGAVNWSLMVAVILVMLLF, AYGMAVTGSMTITGIMMIIVF, ALVALVITLIDAAYLLSTFSK, and IPHGAYWSLILASIPFVTIII.

It belongs to the HAK/KUP transporter (TC 2.A.72) family.

Its subcellular location is the cell inner membrane. It carries out the reaction K(+)(in) + H(+)(in) = K(+)(out) + H(+)(out). Its function is as follows. Transport of potassium into the cell. Likely operates as a K(+):H(+) symporter. In Geobacter metallireducens (strain ATCC 53774 / DSM 7210 / GS-15), this protein is Probable potassium transport system protein Kup 1.